A 27-amino-acid polypeptide reads, in one-letter code: Omega-conotoxin RVIA (27 aa).

Intrachain disulfides connect cysteine 1-cysteine 16, cysteine 8-cysteine 19, and cysteine 15-cysteine 26. 4-hydroxyproline is present on residues proline 4 and proline 7.

It belongs to the conotoxin O1 superfamily. As to expression, expressed by the venom duct.

It localises to the secreted. Its function is as follows. Omega-conotoxins act at presynaptic membranes, they bind and block voltage-gated calcium channels (Cav). This chain is Omega-conotoxin RVIA, found in Conus radiatus (Rayed cone).